Reading from the N-terminus, the 1098-residue chain is MGSKERFHWQSHNVKQSGVDDMVLLPQITEDAIAANLRKRFMDDYIFTYIGSVLISVNPFKQMPYFTDREIDLYQGAAQYENPPHIYALTDNMYRNMLIDCENQCVIISGESGAGKTVAAKYIMGYISKVSGGGEKVQHVKDIILQSNPLLEAFGNAKTVRNNNSSRFGKYFEIQFSRGGEPDGGKISNFLLEKSRVVMQNENERNFHIYYQLLEGASQEQRQNLGLMTPDYYYYLNQSDTYQVDGTDDRSDFGETLSAMQVIGIPPSIQQLVLQLVAGILHLGNISFCEDGNYARVESVDLLAFPAYLLGIDSGRLQEKLTSRKMDSRWGGRSESINVTLNVEQAAYTRDALAKGLYARLFDFLVEAINRAMQKPQEEYSIGVLDIYGFEIFQKNGFEQFCINFVNEKLQQIFIELTLKAEQEEYVQEGIRWTPIQYFNNKVVCDLIENKLSPPGIMSVLDDVCATMHATGGGADQTLLQKLQAAVGTHEHFNSWSAGFVIHHYAGKVSYDVSGFCERNRDVLFSDLIELMQTSEQAFLRMLFPEKLDGDKKGRPSTAGSKIKKQANDLVATLMRCTPHYIRCIKPNETKRPRDWEENRVKHQVEYLGLKENIRVRRAGFAYRRQFAKFLQRYAILTPETWPRWRGDERQGVQHLLRAVNMEPDQYQMGSTKVFVKNPESLFLLEEVRERKFDGFARTIQKAWRRHVAVRKYEEMREEASNILLNKKERRRNSINRNFVGDYLGLEERPELRQFLGKRERVDFADSVTKYDRRFKPIKRDLILTPKCVYVIGREKVKKGPEKGQVCEVLKKKVDIQALRGVSLSTRQDDFFILQEDAADSFLESVFKTEFVSLLCKRFEEATRRPLPLTFSDTLQFRVKKEGWGGGGTRSVTFSRGFGDLAVLKVGGRTLTVSVGDGLPKSSKPTRKGMAKGKPRRSSQAPTRAAPAPPRGMDRNGVPPSARGGPLPLEIMSGGGTHRPPRGPPSTSLGASRRPRARPPSEHNTEFLNVPDQGMAGMQRKRSVGQRPVPGVGRPKPQPRTHGPRCRALYQYVGQDVDELSFNVNEVIEILMEDPSGWWKGRLHGQEGLFPGNYVEKI.

The Myosin motor domain occupies 17–690 (SGVDDMVLLP…SLFLLEEVRE (674 aa)). 110 to 117 (GESGAGKT) is a binding site for ATP. An actin-binding region spans residues 579 to 589 (PHYIRCIKPNE). An IQ domain is found at 693 to 722 (FDGFARTIQKAWRRHVAVRKYEEMREEASN). In terms of domain architecture, TH1 spans 728–917 (KERRRNSINR…GRTLTVSVGD (190 aa)). Disordered stretches follow at residues 913-1009 (VSVG…EFLN) and 1021-1044 (KRSVGQRPVPGVGRPKPQPRTHGP). A compositionally biased stretch (basic residues) spans 924–937 (KPTRKGMAKGKPRR). Residue Ser-1023 is modified to Phosphoserine. The region spanning 1041–1098 (THGPRCRALYQYVGQDVDELSFNVNEVIEILMEDPSGWWKGRLHGQEGLFPGNYVEKI) is the SH3 domain.

This sequence belongs to the TRAFAC class myosin-kinesin ATPase superfamily. Myosin family.

Myosins are actin-based motor molecules with ATPase activity. Unconventional myosins serve in intracellular movements. Their highly divergent tails are presumed to bind to membranous compartments, which would be moved relative to actin filaments. The protein is Unconventional myosin-If (MYO1F) of Homo sapiens (Human).